The following is a 730-amino-acid chain: Synaptotagmin-like protein 5 (730 aa).

One can recognise a RabBD domain in the interval 7–123 (FINLSFLLDH…IITGEWFFEE (117 aa)). The FYVE-type zinc finger occupies 64–106 (CVHCHRNLGLIFDRGDPCQACSLRVCRECRVAGPNGSWKCTVC). S147 bears the Phosphoserine mark. Disordered stretches follow at residues 147–188 (SPGA…GFLL), 217–271 (QHFR…TRTV), and 294–355 (SQEL…LDKD). Composition is skewed to polar residues over residues 248–271 (PKSS…TRTV) and 305–322 (TSGT…SSDQ). C2 domains lie at 406–527 (VSGE…DEWF) and 563–694 (PPEQ…VDWM).

In terms of assembly, binds RAB27A that has been activated by GTP-binding, and possibly also RAB3A and RAB6A. As to expression, highly expressed in placenta and liver.

It is found in the membrane. Functionally, may act as Rab effector protein and play a role in vesicle trafficking. Binds phospholipids. This Homo sapiens (Human) protein is Synaptotagmin-like protein 5 (SYTL5).